An 89-amino-acid chain; its full sequence is Large ribosomal subunit protein eL34 (89 aa).

Positions 1 to 22 are disordered; that stretch reads MPAPRYKSGSSKKVYRKAPGNS.

This sequence belongs to the eukaryotic ribosomal protein eL34 family.

In Methanococcus maripaludis (strain C5 / ATCC BAA-1333), this protein is Large ribosomal subunit protein eL34.